A 392-amino-acid chain; its full sequence is Potassium/proton antiporter CemA (392 aa).

Transmembrane regions (helical) follow at residues 174-194 (FLAS…VWWL), 269-289 (SLAN…MLSL), 316-336 (FLIL…WEVI), and 352-372 (FIFM…KYWI).

Belongs to the CemA family.

It is found in the plastid. The protein resides in the chloroplast inner membrane. It carries out the reaction K(+)(in) + H(+)(out) = K(+)(out) + H(+)(in). Contributes to K(+)/H(+) antiport activity by supporting proton efflux to control proton extrusion and homeostasis in chloroplasts in a light-dependent manner to modulate photosynthesis. Prevents excessive induction of non-photochemical quenching (NPQ) under continuous-light conditions. Indirectly promotes efficient inorganic carbon uptake into chloroplasts. The chain is Potassium/proton antiporter CemA from Nephroselmis olivacea (Green alga).